Here is a 472-residue protein sequence, read N- to C-terminus: Methanethiol oxidase (472 aa).

The protein belongs to the selenium-binding protein family.

The protein resides in the nucleus. It is found in the cytoplasm. The protein localises to the cytosol. Its subcellular location is the membrane. It catalyses the reaction methanethiol + O2 + H2O = hydrogen sulfide + formaldehyde + H2O2 + H(+). The protein operates within organosulfur degradation. Catalyzes the oxidation of methanethiol, an organosulfur compound known to be produced in substantial amounts by gut bacteria. Selenium-binding protein which may be involved in the sensing of reactive xenobiotics in the cytoplasm. May be involved in intra-Golgi protein transport. The protein is Methanethiol oxidase (selenbp1-b) of Xenopus laevis (African clawed frog).